Reading from the N-terminus, the 196-residue chain is Venom platylysin (196 aa).

Belongs to the redulysin-like family. As to expression, expressed by the venom gland.

Its subcellular location is the secreted. Probable insecticidal toxin that has been detected in a semi-pure insecticidal fraction. In Platymeris biguttatus (Two-spotted assassin bug), this protein is Venom platylysin.